The chain runs to 120 residues: Large ribosomal subunit protein uL24 (120 aa).

Positions 1-33 (MTRQPHKQRNRQERAALHEKQKQVRAPLSPELR) are disordered. Residues 10–22 (NRQERAALHEKQK) show a composition bias toward basic and acidic residues.

Belongs to the universal ribosomal protein uL24 family. Part of the 50S ribosomal subunit.

In terms of biological role, one of two assembly initiator proteins, it binds directly to the 5'-end of the 23S rRNA, where it nucleates assembly of the 50S subunit. Functionally, located at the polypeptide exit tunnel on the outside of the subunit. The chain is Large ribosomal subunit protein uL24 from Natronomonas pharaonis (strain ATCC 35678 / DSM 2160 / CIP 103997 / JCM 8858 / NBRC 14720 / NCIMB 2260 / Gabara) (Halobacterium pharaonis).